A 240-amino-acid polypeptide reads, in one-letter code: Orotidine 5'-phosphate decarboxylase (240 aa).

Substrate is bound by residues aspartate 12, lysine 34, 62–71 (DMKLFDIGNT), threonine 117, arginine 180, glutamine 189, glycine 209, and arginine 210. The active-site Proton donor is the lysine 64.

It belongs to the OMP decarboxylase family. Type 1 subfamily. Homodimer.

It catalyses the reaction orotidine 5'-phosphate + H(+) = UMP + CO2. Its pathway is pyrimidine metabolism; UMP biosynthesis via de novo pathway; UMP from orotate: step 2/2. Catalyzes the decarboxylation of orotidine 5'-monophosphate (OMP) to uridine 5'-monophosphate (UMP). In Ruegeria pomeroyi (strain ATCC 700808 / DSM 15171 / DSS-3) (Silicibacter pomeroyi), this protein is Orotidine 5'-phosphate decarboxylase.